The sequence spans 61 residues: Small ribosomal subunit protein uS14 (61 aa).

Positions 24, 27, 40, and 43 each coordinate Zn(2+).

The protein belongs to the universal ribosomal protein uS14 family. Zinc-binding uS14 subfamily. In terms of assembly, part of the 30S ribosomal subunit. Contacts proteins S3 and S10. Requires Zn(2+) as cofactor.

Its function is as follows. Binds 16S rRNA, required for the assembly of 30S particles and may also be responsible for determining the conformation of the 16S rRNA at the A site. In Desulfitobacterium hafniense (strain Y51), this protein is Small ribosomal subunit protein uS14.